The sequence spans 228 residues: Venom allergen 5 (228 aa).

Residues 1–22 (MTKIDLLARVFVIATIIALATA) form the signal peptide. 3 cysteine pairs are disulfide-bonded: cysteine 30–cysteine 124, cysteine 51–cysteine 117, and cysteine 195–cysteine 212. The region spanning 69–214 (KEHNDYGHKV…WNKHFLVCNY (146 aa)) is the SCP domain.

Belongs to the CRISP family. Venom allergen 5-like subfamily. As to expression, expressed by the venom gland.

The protein localises to the secreted. This is Venom allergen 5 from Rhynchium brunneum (Potter wasp).